The following is a 180-amino-acid chain: Putative peroxiredoxin YkuU (180 aa).

One can recognise a Thioredoxin domain in the interval 4-165; it reads RMVGKQAPRF…TLRVLQALQT (162 aa). The Cysteine sulfenic acid (-SOH) intermediate role is filled by C52.

The protein belongs to the peroxiredoxin family. AhpC/Prx1 subfamily. Homodimer; disulfide-linked, upon oxidation.

The protein resides in the cytoplasm. It catalyses the reaction a hydroperoxide + [protein]-dithiol = [protein]-disulfide + an alcohol + H2O. Its function is as follows. Thiol-specific peroxidase that catalyzes the reduction of hydrogen peroxide and organic hydroperoxides to water and alcohols, respectively. Plays a role in cell protection against oxidative stress by detoxifying peroxides. This is Putative peroxiredoxin YkuU (ykuU) from Bacillus subtilis (strain 168).